A 247-amino-acid polypeptide reads, in one-letter code: Large ribosomal subunit protein uL3 (247 aa).

Disordered stretches follow at residues 124–145 and 218–247; these read RLGQ…PGSM and VGQE…ASAE. The segment covering 222-241 has biased composition (basic and acidic residues); the sequence is VKAEAKDTASTEKKQAETKN.

Belongs to the universal ribosomal protein uL3 family. Part of the 50S ribosomal subunit. Forms a cluster with proteins L14 and L19.

Functionally, one of the primary rRNA binding proteins, it binds directly near the 3'-end of the 23S rRNA, where it nucleates assembly of the 50S subunit. In Oenococcus oeni (strain ATCC BAA-331 / PSU-1), this protein is Large ribosomal subunit protein uL3.